The chain runs to 24 residues: Brevinin-1BYc (24 aa).

A disulfide bridge connects residues Cys-18 and Cys-24.

In terms of tissue distribution, expressed by the skin glands.

Its subcellular location is the secreted. In terms of biological role, antibacterial activity against Gram-positive bacterium S.aureus. Weak antifungal activity against C.albicans. This Rana boylii (Foothill yellow-legged frog) protein is Brevinin-1BYc.